We begin with the raw amino-acid sequence, 264 residues long: Flagellar basal-body rod protein FlgG (264 aa).

Belongs to the flagella basal body rod proteins family. The basal body constitutes a major portion of the flagellar organelle and consists of four rings (L,P,S, and M) mounted on a central rod. The rod consists of about 26 subunits of FlgG in the distal portion, and FlgB, FlgC and FlgF are thought to build up the proximal portion of the rod with about 6 subunits each.

The protein localises to the bacterial flagellum basal body. This is Flagellar basal-body rod protein FlgG (flgG) from Bacillus subtilis (strain 168).